A 191-amino-acid chain; its full sequence is MVKMIVGLGNPGSKYNDTKHNIGFMAVDRIVKDLDVNFTEDKNFKAEIGSDFINGEKIYFIKPTTFMNNSGIAVKALLTYYNISIKDMIIIYDDLDMEVGKIRFRQKGSAGGHNGIKSIIAHLGTQEFDRIKVGIGRPNGRMTVINHVLGKFDKNDEIMILNTLDKVDNAVNYYLQTNDFQKTMQKYNGLK.

A tRNA-binding site is contributed by tyrosine 15. The active-site Proton acceptor is histidine 20. Positions 66, 68, and 114 each coordinate tRNA.

The protein belongs to the PTH family. Monomer.

It is found in the cytoplasm. The catalysed reaction is an N-acyl-L-alpha-aminoacyl-tRNA + H2O = an N-acyl-L-amino acid + a tRNA + H(+). Functionally, hydrolyzes ribosome-free peptidyl-tRNAs (with 1 or more amino acids incorporated), which drop off the ribosome during protein synthesis, or as a result of ribosome stalling. Catalyzes the release of premature peptidyl moieties from peptidyl-tRNA molecules trapped in stalled 50S ribosomal subunits, and thus maintains levels of free tRNAs and 50S ribosomes. The chain is Peptidyl-tRNA hydrolase from Streptococcus agalactiae serotype III (strain NEM316).